The primary structure comprises 306 residues: Acetyl-coenzyme A carboxylase carboxyl transferase subunit beta (306 aa).

In terms of domain architecture, CoA carboxyltransferase N-terminal spans 25-294 (VWTKCDSCGQ…PSPDAPREAV (270 aa)). Residues Cys-29, Cys-32, Cys-48, and Cys-51 each coordinate Zn(2+). The segment at 29–51 (CDSCGQVLYRAELERNLEVCPKC) adopts a C4-type zinc-finger fold. A disordered region spans residues 286-306 (SPDAPREAVVVPPVPDQDHEA).

It belongs to the AccD/PCCB family. As to quaternary structure, acetyl-CoA carboxylase is a heterohexamer composed of biotin carboxyl carrier protein (AccB), biotin carboxylase (AccC) and two subunits each of ACCase subunit alpha (AccA) and ACCase subunit beta (AccD). Zn(2+) is required as a cofactor.

It is found in the cytoplasm. It catalyses the reaction N(6)-carboxybiotinyl-L-lysyl-[protein] + acetyl-CoA = N(6)-biotinyl-L-lysyl-[protein] + malonyl-CoA. It functions in the pathway lipid metabolism; malonyl-CoA biosynthesis; malonyl-CoA from acetyl-CoA: step 1/1. Component of the acetyl coenzyme A carboxylase (ACC) complex. Biotin carboxylase (BC) catalyzes the carboxylation of biotin on its carrier protein (BCCP) and then the CO(2) group is transferred by the transcarboxylase to acetyl-CoA to form malonyl-CoA. The sequence is that of Acetyl-coenzyme A carboxylase carboxyl transferase subunit beta from Cronobacter sakazakii (strain ATCC BAA-894) (Enterobacter sakazakii).